The primary structure comprises 843 residues: Tetratricopeptide repeat protein 7B (843 aa).

The TPR 1 repeat unit spans residues 97–131 (QESNLVMAKLTYVEGDYKEALNIYARVGLDDLPLT). Phosphoserine occurs at positions 160 and 202. 6 TPR repeats span residues 219-252 (ETGL…VETR), 363-396 (SVVY…AFEE), 397-430 (FHLW…KPDD), 479-514 (TYSL…SPTD), 516-548 (QAAF…QGDD), and 549-582 (ANSL…YPEN). A phosphoserine mark is found at Ser-625, Ser-629, Ser-630, Ser-673, Ser-677, Ser-678, and Ser-681. 4 TPR repeats span residues 696–729 (AQIW…FPMS), 730–763 (HNVL…SPTH), 765–797 (KSMQ…NSTA), and 798–831 (HEVW…EASS).

Component of a phosphatidylinositol 4-kinase (PI4K) complex, composed of PI4KA, EFR3 (EFR3A or EFR3B), TTC7 (TTC7A or TTC7B) and HYCC (HYCC1 or HYCC2). Interacts with PI4KA, interaction is direct. Interacts with EFR3 (EFR3A or EFR3B), interaction is direct. Interacts with HYCC (HYCC1 or HYCC2), interaction is direct. Association with the PI4K complex is strongly reduced by TMEM150A.

It is found in the cytoplasm. The protein resides in the cytosol. It localises to the cell membrane. Functionally, component of a complex required to localize phosphatidylinositol 4-kinase (PI4K) to the plasma membrane. The complex acts as a regulator of phosphatidylinositol 4-phosphate (PtdIns(4)P) synthesis. In the complex, plays a central role in bridging PI4KA to EFR3B and HYCC1, via direct interactions. The sequence is that of Tetratricopeptide repeat protein 7B from Mus musculus (Mouse).